We begin with the raw amino-acid sequence, 477 residues long: Probable cytosol aminopeptidase (477 aa).

Lysine 245 and aspartate 250 together coordinate Mn(2+). Residue lysine 257 is part of the active site. Residues aspartate 268, aspartate 327, and glutamate 329 each contribute to the Mn(2+) site. Arginine 331 is an active-site residue.

This sequence belongs to the peptidase M17 family. Requires Mn(2+) as cofactor.

It is found in the cytoplasm. The catalysed reaction is Release of an N-terminal amino acid, Xaa-|-Yaa-, in which Xaa is preferably Leu, but may be other amino acids including Pro although not Arg or Lys, and Yaa may be Pro. Amino acid amides and methyl esters are also readily hydrolyzed, but rates on arylamides are exceedingly low.. It carries out the reaction Release of an N-terminal amino acid, preferentially leucine, but not glutamic or aspartic acids.. In terms of biological role, presumably involved in the processing and regular turnover of intracellular proteins. Catalyzes the removal of unsubstituted N-terminal amino acids from various peptides. The chain is Probable cytosol aminopeptidase from Exiguobacterium sibiricum (strain DSM 17290 / CCUG 55495 / CIP 109462 / JCM 13490 / 255-15).